The following is a 581-amino-acid chain: Phosphoglucomutase, cytoplasmic (581 aa).

The segment covering 1–11 (MVFSVAKKDTT) has biased composition (basic and acidic residues). The disordered stretch occupies residues 1–20 (MVFSVAKKDTTPYEGQKPGT). Arg24 and Ser123 together coordinate alpha-D-glucose 1,6-bisphosphate. The active-site Phosphoserine intermediate is Ser123. Positions 123, 298, 300, and 302 each coordinate Mg(2+). Ser123 is modified (phosphoserine). Residues Asp302, Arg303, Thr366, Glu385, Ser387, and Lys398 each contribute to the alpha-D-glucose 1,6-bisphosphate site.

Belongs to the phosphohexose mutase family. In terms of assembly, monomer. Mg(2+) serves as cofactor.

The protein localises to the cytoplasm. The catalysed reaction is alpha-D-glucose 1-phosphate = alpha-D-glucose 6-phosphate. The enzyme catalyses O-phospho-L-seryl-[protein] + alpha-D-glucose 1-phosphate = alpha-D-glucose 1,6-bisphosphate + L-seryl-[protein]. It catalyses the reaction alpha-D-glucose 1,6-bisphosphate + L-seryl-[protein] = O-phospho-L-seryl-[protein] + alpha-D-glucose 6-phosphate. Its function is as follows. Catalyzes the reversible isomerization of alpha-D-glucose 1-phosphate to alpha-D-glucose 6-phosphate. The mechanism proceeds via the intermediate compound alpha-D-glucose 1,6-bisphosphate. This enzyme participates in both the breakdown and synthesis of glucose. The chain is Phosphoglucomutase, cytoplasmic (PGM1) from Bromus inermis (Smooth brome grass).